A 324-amino-acid polypeptide reads, in one-letter code: Beta-ketoacyl-[acyl-carrier-protein] synthase III (324 aa).

Active-site residues include C113 and H251. Positions 252-256 (QANKR) are ACP-binding. Residue N281 is part of the active site.

This sequence belongs to the thiolase-like superfamily. FabH family. Homodimer.

Its subcellular location is the cytoplasm. The catalysed reaction is malonyl-[ACP] + acetyl-CoA + H(+) = 3-oxobutanoyl-[ACP] + CO2 + CoA. Its pathway is lipid metabolism; fatty acid biosynthesis. Functionally, catalyzes the condensation reaction of fatty acid synthesis by the addition to an acyl acceptor of two carbons from malonyl-ACP. Catalyzes the first condensation reaction which initiates fatty acid synthesis and may therefore play a role in governing the total rate of fatty acid production. Possesses both acetoacetyl-ACP synthase and acetyl transacylase activities. Its substrate specificity determines the biosynthesis of branched-chain and/or straight-chain of fatty acids. This chain is Beta-ketoacyl-[acyl-carrier-protein] synthase III, found in Bartonella bacilliformis (strain ATCC 35685 / KC583 / Herrer 020/F12,63).